We begin with the raw amino-acid sequence, 282 residues long: 2-dehydro-3-deoxyphosphooctonate aldolase (282 aa).

This sequence belongs to the KdsA family.

It is found in the cytoplasm. It catalyses the reaction D-arabinose 5-phosphate + phosphoenolpyruvate + H2O = 3-deoxy-alpha-D-manno-2-octulosonate-8-phosphate + phosphate. The protein operates within carbohydrate biosynthesis; 3-deoxy-D-manno-octulosonate biosynthesis; 3-deoxy-D-manno-octulosonate from D-ribulose 5-phosphate: step 2/3. Its pathway is bacterial outer membrane biogenesis; lipopolysaccharide biosynthesis. The chain is 2-dehydro-3-deoxyphosphooctonate aldolase from Shewanella sp. (strain ANA-3).